The primary structure comprises 344 residues: Plastoglobule-localized metallopeptidase 48, chloroplastic (344 aa).

The N-terminal 47 residues, 1-47, are a transit peptide targeting the chloroplast; it reads MAVSVSAPVLSLCYNQSGELSRSLGYRLPKKVGFSSGRRSVSYIGFG. 2 helical membrane-spanning segments follow: residues 102–122 and 169–189; these read LLGSMTEQIMLLENIGTSVLV and FIVVHTSLIELLTSAELQAVL. His-191 lines the Zn(2+) pocket. The active site involves Glu-192. Zn(2+) is bound at residue His-195. A helical membrane pass occupies residues 201 to 221; the sequence is GVWLTFANILTLGAYTVPAFG. Residue Glu-240 coordinates Zn(2+). Residues 256–272 traverse the membrane as a helical segment; the sequence is VVVSVLMKLAGGCPSIA.

The protein belongs to the peptidase M48 family. M48D subfamily. Interacts with plastoglobule (PG) core proteins ABC1K3, PES1 and CCD4. Zn(2+) serves as cofactor. Mostly expressed in flowers (e.g. sepals, petals and stamen), seeds, leaves and cotyledons.

It is found in the plastid. It localises to the chloroplast. The protein localises to the plastoglobule. The protein resides in the chloroplast membrane. Metalloendopeptidase with a Zn-dependent proteolytic activity and substrate cleavage upstream of hydrophobic residues. Positive regulator of senescence, probably by degrading CCD4, thus participating in the controlled removal of carotenoids from the thylakoid membrane during the senescence process. This chain is Plastoglobule-localized metallopeptidase 48, chloroplastic, found in Arabidopsis thaliana (Mouse-ear cress).